Consider the following 740-residue polypeptide: E3 ubiquitin-protein ligase WAV3 (740 aa).

The disordered stretch occupies residues 14–105 (PRNSDAAAPD…AISNPSSPRS (92 aa)). Low complexity predominate over residues 49–67 (SGGSNPSTPRSTSSPSLRC). A compositionally biased stretch (polar residues) spans 71 to 90 (DAQTPTAEQTSTPRSATKSP). Residues 122–167 (CGICLNSVKTGQGTAKYTAECSHAFHFPCIADYVRKQGKLVCPVCN) form an RING-type; atypical zinc finger. In terms of domain architecture, VWFA spans 332-476 (DLVVVVDVGG…IPVTEHGFGE (145 aa)). The segment at 677 to 709 (QSQHQQQHNQRRRGSERETTTTMTLMDENGEPL) is disordered.

Interacts with SINAT1, SINAT2, SINAT3, SINAT4, SINAT5, TOR1/SPR2 and FIP2. Expressed in root tips and leaf primordia.

It carries out the reaction S-ubiquitinyl-[E2 ubiquitin-conjugating enzyme]-L-cysteine + [acceptor protein]-L-lysine = [E2 ubiquitin-conjugating enzyme]-L-cysteine + N(6)-ubiquitinyl-[acceptor protein]-L-lysine.. Its function is as follows. E3 ubiquitin-protein ligase involved in the regulation of root growth. Acts as a positive regulator of root gravitropism. Possesses E3 protein ligase activity in vitro. The protein is E3 ubiquitin-protein ligase WAV3 of Arabidopsis thaliana (Mouse-ear cress).